Reading from the N-terminus, the 125-residue chain is Multifunctional methyltransferase subunit TRM112-like protein (125 aa).

One can recognise a TRM112 domain in the interval 2 to 121; the sequence is KLFVHNFMSS…RDGIPNMLKV (120 aa).

Belongs to the TRM112 family.

It is found in the nucleus. It localises to the nucleoplasm. The protein localises to the cytoplasm. The protein resides in the perinuclear region. Functionally, acts as an activator of both RNA and protein methyltransferases. The sequence is that of Multifunctional methyltransferase subunit TRM112-like protein from Caenorhabditis elegans.